The primary structure comprises 338 residues: Methionine import ATP-binding protein MetN 1 (338 aa).

In terms of domain architecture, ABC transporter spans 2–241; the sequence is IEVRSVTKRF…PHSELGVGLL (240 aa). Residue 38-45 participates in ATP binding; sequence GQSGAGKT.

This sequence belongs to the ABC transporter superfamily. Methionine importer (TC 3.A.1.24) family. In terms of assembly, the complex is composed of two ATP-binding proteins (MetN), two transmembrane proteins (MetI) and a solute-binding protein (MetQ).

The protein resides in the cell membrane. The enzyme catalyses L-methionine(out) + ATP + H2O = L-methionine(in) + ADP + phosphate + H(+). It catalyses the reaction D-methionine(out) + ATP + H2O = D-methionine(in) + ADP + phosphate + H(+). Its function is as follows. Part of the ABC transporter complex MetNIQ involved in methionine import. Responsible for energy coupling to the transport system. The chain is Methionine import ATP-binding protein MetN 1 from Rhodococcus jostii (strain RHA1).